The sequence spans 305 residues: Phosphatidate cytidylyltransferase (305 aa).

8 consecutive transmembrane segments (helical) span residues 27–47, 67–87, 96–116, 124–144, 150–170, 202–222, 232–252, and 277–297; these read FLVI…VGLL, FPFS…ALTC, FPEH…IRLV, LGPI…SVPI, ILYG…AIFL, TVVG…LFYS, IAVP…GFFG, and MLDV…ILLI.

The protein belongs to the CDS family.

It localises to the cell membrane. The enzyme catalyses a 1,2-diacyl-sn-glycero-3-phosphate + CTP + H(+) = a CDP-1,2-diacyl-sn-glycerol + diphosphate. It participates in phospholipid metabolism; CDP-diacylglycerol biosynthesis; CDP-diacylglycerol from sn-glycerol 3-phosphate: step 3/3. The sequence is that of Phosphatidate cytidylyltransferase (cdsA) from Chlamydia trachomatis serovar D (strain ATCC VR-885 / DSM 19411 / UW-3/Cx).